Consider the following 128-residue polypeptide: Tachykinin-4 (128 aa).

An N-terminal signal peptide occupies residues 1–16; it reads MLPLLALLLLIGPSVC. A propeptide spanning residues 17 to 54 is cleaved from the precursor; that stretch reads TTAGDREELAFGAEAESWVTVNLKGIPVPSIELKLQEL. Met66 is subject to Methionine amide. The propeptide occupies 69–128; that stretch reads RVGGYQLGRIVQDLLGTRGLSIEGTCRQAASQQRARPGAVTRESLQSREEDEAPLTTSNV. Residues 96–128 form a disordered region; sequence QAASQQRARPGAVTRESLQSREEDEAPLTTSNV.

It belongs to the tachykinin family. Expressed in hematopoietic cells with highest levels in pre- and pro-B cells but not in later developmental stages. Also detected in uterus, skeletal muscle, brain, spleen, stomach, skin and lactating mammary gland and in cells of myeloid lineage including dendritic and microglial cells and macrophages. In uterus, highest expression is observed in non-pregnant diestrus mice and in day 5 pregnant mice. Compared with mice in diestrus, decreases 2.6-fold in uteri from non-pregnant mice in estrus and 10.2-fold in day 17 pregnant mice. Detected at sites of chronic inflammation such as granulomas.

The protein localises to the secreted. Its function is as follows. Tachykinins are active peptides which excite neurons, evoke behavioral responses, are potent vasodilators and secretagogues, and contract (directly or indirectly) many smooth muscles. Hemokinin induces plasma extravasation, mast cell degranulation, muscle contraction, salivary secretion and scratching behavior. Increases sperm motility. Induces potent analgesic effects and may play a role in pain modulation. Promotes survival of bone marrow B lineage cells and of cultured LPS-stimulated pre-B cells and may act as an autocrine factor required for B-cell survival and proliferation. Lowers systemic arterial pressure following intravenous injection. Induces interferon-gamma production and may play a role in the inflammatory response. Shows potent affinity and specificity for the NK-1 receptor. The polypeptide is Tachykinin-4 (Mus musculus (Mouse)).